The primary structure comprises 205 residues: Small ribosomal subunit protein uS4 (205 aa).

The tract at residues 21–47 (GRPKSPFNKRDYGPGQHGQGRKGKPSD) is disordered. An S4 RNA-binding domain is found at 94 to 154 (RRLDSVVYRA…DKSKQLAIID (61 aa)).

The protein belongs to the universal ribosomal protein uS4 family. In terms of assembly, part of the 30S ribosomal subunit. Contacts protein S5. The interaction surface between S4 and S5 is involved in control of translational fidelity.

One of the primary rRNA binding proteins, it binds directly to 16S rRNA where it nucleates assembly of the body of the 30S subunit. Its function is as follows. With S5 and S12 plays an important role in translational accuracy. This Pelagibacter ubique (strain HTCC1062) protein is Small ribosomal subunit protein uS4.